Here is a 261-residue protein sequence, read N- to C-terminus: uncharacterized protein (261 aa).

Residue glutamate 46 is part of the active site.

Belongs to the PhzF family.

This is an uncharacterized protein from Pseudomonas aeruginosa (strain ATCC 15692 / DSM 22644 / CIP 104116 / JCM 14847 / LMG 12228 / 1C / PRS 101 / PAO1).